Consider the following 447-residue polypeptide: MTTILKHLPVGQRIGIAFSGGLDTSAALLWMRQKGAVPYAYTANLGQPDEEDYDAIPRRAMEYGAENARLIDCRKQLVAEGIAAIQCGAFHNTTGGLTYFNTTPLGRAVTGTMLVAAMKEDGVNIWGDGSTYKGNDIERFYRYGLLTNAELQIYKPWLDTDFIDELGGRHEMSEFMIACGFDYKMSVEKAYSTDSNMLGATHEAKDLEYLHSSVKIVNPIMGVKFWDESVKIPAEEVTVRFEQGHPVALNGKTFSDDVEMMLEANRIGGRHGLGMSDQIENRIIEAKSRGIYEAPGMALLHIAYERLLTGIHNEDTIEQYHAHGRQLGRLLYQGRWFDSQALMLRDSLQRWVASQITGEVTLELRRGNDYSILNTVSENLTYKPERLTMEKGDSVFSPDDRIGQLTMRNLDITDTREKLFGYAKTGLLSSSAASGVPQVENLENKGQ.

ATP contacts are provided by residues Ala-17 to Ser-25 and Ala-43. Tyr-99 contributes to the L-citrulline binding site. Residues Gly-129 and Thr-131 each contribute to the ATP site. Positions 131, 135, and 136 each coordinate L-aspartate. Asn-135 serves as a coordination point for L-citrulline. Asp-136 serves as a coordination point for ATP. L-citrulline is bound by residues Arg-139 and Ser-192. Asp-194 contacts ATP. L-citrulline-binding residues include Thr-201, Glu-203, and Glu-280.

Belongs to the argininosuccinate synthase family. Type 2 subfamily. As to quaternary structure, homotetramer.

Its subcellular location is the cytoplasm. The catalysed reaction is L-citrulline + L-aspartate + ATP = 2-(N(omega)-L-arginino)succinate + AMP + diphosphate + H(+). It functions in the pathway amino-acid biosynthesis; L-arginine biosynthesis; L-arginine from L-ornithine and carbamoyl phosphate: step 2/3. The protein is Argininosuccinate synthase of Escherichia coli O9:H4 (strain HS).